We begin with the raw amino-acid sequence, 433 residues long: Protein root UVB sensitive 2, chloroplastic (433 aa).

The protein belongs to the RUS1 family. In terms of assembly, interacts (via the DUF647 domain) with RUS1 (via the DUF647 domain). In terms of tissue distribution, expressed throughout the plant, with a higher expression near the root apical meristem, in the cortex region of the root elongation zone, in lateral roots and emerging lateral roots. Not detected in extreme root apical meristem or root cap.

It localises to the plastid. In terms of biological role, involved in a root UV-B sensing pathway and in the protection against the hypersensitivity to very low-fluence-rate (VLF) UV-B. RSU1 and RUS2 are probably both negative modulators of the same UV-B perception pathway, which when overstimulated in the roots causes a block to postgermination development. Required for polar auxin transport and to maintain the normal levels of PIN proteins in the root. This chain is Protein root UVB sensitive 2, chloroplastic, found in Arabidopsis thaliana (Mouse-ear cress).